We begin with the raw amino-acid sequence, 112 residues long: Ribosome-binding factor A (112 aa).

This sequence belongs to the RbfA family. Monomer. Binds 30S ribosomal subunits, but not 50S ribosomal subunits or 70S ribosomes.

It is found in the cytoplasm. Functionally, one of several proteins that assist in the late maturation steps of the functional core of the 30S ribosomal subunit. Associates with free 30S ribosomal subunits (but not with 30S subunits that are part of 70S ribosomes or polysomes). Required for efficient processing of 16S rRNA. May interact with the 5'-terminal helix region of 16S rRNA. This chain is Ribosome-binding factor A, found in Mycoplasma genitalium (strain ATCC 33530 / DSM 19775 / NCTC 10195 / G37) (Mycoplasmoides genitalium).